The primary structure comprises 206 residues: MPQYKLTYFDIRGLGEGARLIFHQAGVKFEDNRLKREDWPALKPKTPFGQLPLLEVDGEVLAQSAAIYRYLGRQFGLAGKTPMEEAQVDSIFDQFKDFMAELRPCFRVLAGFEEGDKEKVLKEVAVPARDKHLPLLEKFLAKSGSEYMVGKSVTWADLVITDSLASWESLIPDFLSGHLQLKKYIEHVRELPNIKKWIAERPKTPY.

In terms of domain architecture, GST N-terminal spans 2 to 79 (PQYKLTYFDI…YLGRQFGLAG (78 aa)). Residues Tyr8, Trp39, Lys43, 49–51 (GQL), and 63–64 (QS) contribute to the glutathione site. Residues 81 to 206 (TPMEEAQVDS…WIAERPKTPY (126 aa)) enclose the GST C-terminal domain.

Belongs to the GST superfamily. Sigma family.

The catalysed reaction is RX + glutathione = an S-substituted glutathione + a halide anion + H(+). Its function is as follows. Conjugation of reduced glutathione to a wide number of exogenous and endogenous hydrophobic electrophiles. Can also function as a GSH peroxidase. The chain is Glutathione S-transferase 1 (GST1) from Ascaris suum (Pig roundworm).